The following is a 392-amino-acid chain: Chaperone protein DnaJ 2 (392 aa).

In terms of domain architecture, J spans 10–75; that stretch reads DFYKELGVSS…AKRKEYDETR (66 aa). A CR-type zinc finger spans residues 161–239; the sequence is GVAMPLRLTS…CKGTGVTTRT (79 aa). Cys174, Cys177, Cys191, Cys194, Cys213, Cys216, Cys227, and Cys230 together coordinate Zn(2+). CXXCXGXG motif repeat units follow at residues 174–181, 191–198, 213–220, and 227–234; these read CTNCHGSG, CPTCNGSG, CTDCRGSG, and CDECKGTG.

The protein belongs to the DnaJ family. As to quaternary structure, homodimer. Requires Zn(2+) as cofactor.

It localises to the cytoplasm. Functionally, participates actively in the response to hyperosmotic and heat shock by preventing the aggregation of stress-denatured proteins and by disaggregating proteins, also in an autonomous, DnaK-independent fashion. Unfolded proteins bind initially to DnaJ; upon interaction with the DnaJ-bound protein, DnaK hydrolyzes its bound ATP, resulting in the formation of a stable complex. GrpE releases ADP from DnaK; ATP binding to DnaK triggers the release of the substrate protein, thus completing the reaction cycle. Several rounds of ATP-dependent interactions between DnaJ, DnaK and GrpE are required for fully efficient folding. Also involved, together with DnaK and GrpE, in the DNA replication of plasmids through activation of initiation proteins. This is Chaperone protein DnaJ 2 from Mycolicibacterium paratuberculosis (strain ATCC BAA-968 / K-10) (Mycobacterium paratuberculosis).